The following is a 257-amino-acid chain: Ribosomal RNA small subunit methyltransferase A (257 aa).

6 residues coordinate S-adenosyl-L-methionine: N12, L14, G39, E60, D85, and N105.

The protein belongs to the class I-like SAM-binding methyltransferase superfamily. rRNA adenine N(6)-methyltransferase family. RsmA subfamily.

The protein resides in the cytoplasm. It carries out the reaction adenosine(1518)/adenosine(1519) in 16S rRNA + 4 S-adenosyl-L-methionine = N(6)-dimethyladenosine(1518)/N(6)-dimethyladenosine(1519) in 16S rRNA + 4 S-adenosyl-L-homocysteine + 4 H(+). In terms of biological role, specifically dimethylates two adjacent adenosines (A1518 and A1519) in the loop of a conserved hairpin near the 3'-end of 16S rRNA in the 30S particle. May play a critical role in biogenesis of 30S subunits. The protein is Ribosomal RNA small subunit methyltransferase A of Methylococcus capsulatus (strain ATCC 33009 / NCIMB 11132 / Bath).